The chain runs to 469 residues: Argininosuccinate lyase (469 aa).

It belongs to the lyase 1 family. Argininosuccinate lyase subfamily.

Its subcellular location is the cytoplasm. The catalysed reaction is 2-(N(omega)-L-arginino)succinate = fumarate + L-arginine. It functions in the pathway amino-acid biosynthesis; L-arginine biosynthesis; L-arginine from L-ornithine and carbamoyl phosphate: step 3/3. The protein is Argininosuccinate lyase of Burkholderia thailandensis (strain ATCC 700388 / DSM 13276 / CCUG 48851 / CIP 106301 / E264).